The following is a 156-amino-acid chain: ATP synthase subunit b (156 aa).

A helical transmembrane segment spans residues 5–25 (LTLIGQAIAFAVFVWFCMKFV).

The protein belongs to the ATPase B chain family. As to quaternary structure, F-type ATPases have 2 components, F(1) - the catalytic core - and F(0) - the membrane proton channel. F(1) has five subunits: alpha(3), beta(3), gamma(1), delta(1), epsilon(1). F(0) has three main subunits: a(1), b(2) and c(10-14). The alpha and beta chains form an alternating ring which encloses part of the gamma chain. F(1) is attached to F(0) by a central stalk formed by the gamma and epsilon chains, while a peripheral stalk is formed by the delta and b chains.

The protein localises to the cell inner membrane. Its function is as follows. F(1)F(0) ATP synthase produces ATP from ADP in the presence of a proton or sodium gradient. F-type ATPases consist of two structural domains, F(1) containing the extramembraneous catalytic core and F(0) containing the membrane proton channel, linked together by a central stalk and a peripheral stalk. During catalysis, ATP synthesis in the catalytic domain of F(1) is coupled via a rotary mechanism of the central stalk subunits to proton translocation. In terms of biological role, component of the F(0) channel, it forms part of the peripheral stalk, linking F(1) to F(0). The polypeptide is ATP synthase subunit b (Chromohalobacter salexigens (strain ATCC BAA-138 / DSM 3043 / CIP 106854 / NCIMB 13768 / 1H11)).